A 597-amino-acid polypeptide reads, in one-letter code: Plasmepsin V (597 aa).

Over 1–551 the chain is Lumenal; that stretch reads MNNYFLRKEN…EKENIFLKVS (551 aa). Positions 33 to 88 form a coiled coil; the sequence is CNNVENKIDNVGKKIENVGKKIGDMENKNDNVENKNDNVENKNDNVGNKNDNVKNA. A compositionally biased stretch (basic and acidic residues) spans 58–75; it reads ENKNDNVENKNDNVENKN. Residues 58–83 are disordered; it reads ENKNDNVENKNDNVENKNDNVGNKND. Residues 107-521 form the Peptidase A1 domain; it reads YFLDIDIGKP…DLQQNQIAFI (415 aa). D125 is an active-site residue. Intrachain disulfides connect C135–C218, C138–C141, C162–C173, C167–C178, C266–C525, C396–C441, and C450–C486. A compositionally biased stretch (basic and acidic residues) spans 289 to 298; that stretch reads KEKQKMDKSD. The segment at 289-323 is disordered; it reads KEKQKMDKSDNNSSNKGNVSIKLKNNDKNDDEENN. Low complexity predominate over residues 299–311; it reads NNSSNKGNVSIKL. D372 is a catalytic residue. The helical transmembrane segment at 552 to 572 threads the bilayer; the sequence is YINLYCLWLLLALTILLSLIL. Over 573-597 the chain is Cytoplasmic; that stretch reads YVRKMFYMDYFPLSDQNKSPIQEST.

Belongs to the peptidase A1 family. In terms of assembly, component of a complex composed of SPC25 and PMV; the interaction is mediated via the transmembrane domains. The complex interacts with the SEC61 channel-forming translocon complex and is involved in the recognition and import of PEXEL motif-containing proteins into the ER for subsequent export. In terms of processing, it is not clear if the zymogen has a cleavable propeptide. In vitro, appears to be cleaved between Asn-87 and Ala-88. Cleavage of the putative propeptide is dispensable for catalytic activity.

It is found in the endoplasmic reticulum membrane. In terms of biological role, during the asexual blood stage, plays an essential role in the export of several proteins into the host erythrocytes by cleaving the pentameric localization motif RxLxE/Q/D (termed Plasmodium export element (PEXEL)) located downstream of the N-terminal secretory signal sequence. Specifically, cleaves after the leucine residue in the RxLxE/Q/D (or RxLxxE) motif of exported proteins including RESA, EMP2, EMP3, KAHRP, RIF/Rifin and STEVOR. Also, by regulating protein export, plays an essential role in gametocyte development and thus parasite transmission to the mosquito vector. The protein is Plasmepsin V of Plasmodium falciparum (isolate HB3).